The primary structure comprises 176 residues: V-type proton ATPase 16 kDa proteolipid subunit (176 aa).

The Lumenal portion of the chain corresponds to 1–17; sequence MSVLLRSVTELCPVYSP. Residues 18-38 form a helical membrane-spanning segment; sequence FFGSMGITASIVFTVFGGAYG. At 39 to 62 the chain is on the cytoplasmic side; sequence TAKSSVGISSVGVMKPEFIMRSLF. Residues 63 to 83 traverse the membrane as a helical segment; that stretch reads PVVFAGVIGLYGLIVCIVLFI. At 84-98 the chain is on the lumenal side; that stretch reads NVNKSEYSLNRAFLD. The helical transmembrane segment at 99-119 threads the bilayer; the sequence is LGAGLTCGLCGLASGMSIGIS. Residues 120-136 are Cytoplasmic-facing; sequence GDCGVRGAAQQPKLFVS. A helical transmembrane segment spans residues 137–157; that stretch reads MLICLIFSEALALYGFIVALI. Over 158–176 the chain is Lumenal; sequence MAATGDNSCVATASTSSSS.

The protein belongs to the V-ATPase proteolipid subunit family. As to quaternary structure, V-ATPase is a heteromultimeric enzyme composed of a peripheral catalytic V1 complex (main components: subunits A, B, C, D, E, and F) attached to an integral membrane V0 proton pore complex (main component: the proteolipid protein; which is present as a hexamer that forms the proton-conducting pore).

It is found in the vacuole membrane. In terms of biological role, proton-conducting pore forming subunit of the membrane integral V0 complex of vacuolar ATPase. V-ATPase is responsible for acidifying a variety of intracellular compartments in eukaryotic cells. This chain is V-type proton ATPase 16 kDa proteolipid subunit (VMA3), found in Entamoeba dispar.